The primary structure comprises 552 residues: Putative transport protein Spro_0050 (552 aa).

The next 6 membrane-spanning stretches (helical) occupy residues 4–24, 26–46, 65–85, 96–116, 117–137, and 158–178; these read IALT…MGNW, IYGV…VGHF, FGLI…FFSS, FAIL…KLFA, VPLP…PALG, and MGYA…MWLI. 2 consecutive RCK C-terminal domains span residues 192 to 276 and 279 to 361; these read AFAS…VIGE and DVSL…IVGN. Helical transmembrane passes span 371–391, 393–413, 439–459, 464–484, 493–513, and 530–550; these read MLPV…PLFI, GFPA…ALIL, IVLF…DTLI, LAWI…VGVL, YLTL…LAFA, and VYPL…VLFW.

It belongs to the AAE transporter (TC 2.A.81) family. YidE subfamily.

It localises to the cell membrane. This chain is Putative transport protein Spro_0050, found in Serratia proteamaculans (strain 568).